The sequence spans 218 residues: Probable transaldolase (218 aa).

The active-site Schiff-base intermediate with substrate is the Lys-87.

This sequence belongs to the transaldolase family. Type 3B subfamily.

It localises to the cytoplasm. It carries out the reaction D-sedoheptulose 7-phosphate + D-glyceraldehyde 3-phosphate = D-erythrose 4-phosphate + beta-D-fructose 6-phosphate. It functions in the pathway carbohydrate degradation; pentose phosphate pathway; D-glyceraldehyde 3-phosphate and beta-D-fructose 6-phosphate from D-ribose 5-phosphate and D-xylulose 5-phosphate (non-oxidative stage): step 2/3. Functionally, transaldolase is important for the balance of metabolites in the pentose-phosphate pathway. The protein is Probable transaldolase of Cytophaga hutchinsonii (strain ATCC 33406 / DSM 1761 / CIP 103989 / NBRC 15051 / NCIMB 9469 / D465).